Consider the following 331-residue polypeptide: Ornithine carbamoyltransferase, catabolic (331 aa).

Carbamoyl phosphate is bound by residues 57–60 (STRT), glutamine 82, arginine 106, and 133–136 (HPTQ). L-ornithine-binding positions include asparagine 166, aspartate 230, and 234–235 (SM). Carbamoyl phosphate-binding positions include 272–273 (CL) and arginine 317.

This sequence belongs to the aspartate/ornithine carbamoyltransferase superfamily. OTCase family.

It is found in the cytoplasm. The catalysed reaction is carbamoyl phosphate + L-ornithine = L-citrulline + phosphate + H(+). Its pathway is amino-acid degradation; L-arginine degradation via ADI pathway; carbamoyl phosphate from L-arginine: step 2/2. In terms of biological role, reversibly catalyzes the transfer of the carbamoyl group from carbamoyl phosphate (CP) to the N(epsilon) atom of ornithine (ORN) to produce L-citrulline. The polypeptide is Ornithine carbamoyltransferase, catabolic (arcB) (Clostridium perfringens (strain ATCC 13124 / DSM 756 / JCM 1290 / NCIMB 6125 / NCTC 8237 / Type A)).